The primary structure comprises 315 residues: Methionyl-tRNA formyltransferase (315 aa).

(6S)-5,6,7,8-tetrahydrofolate is bound at residue 114 to 117 (SLLP).

This sequence belongs to the Fmt family.

The catalysed reaction is L-methionyl-tRNA(fMet) + (6R)-10-formyltetrahydrofolate = N-formyl-L-methionyl-tRNA(fMet) + (6S)-5,6,7,8-tetrahydrofolate + H(+). Its function is as follows. Attaches a formyl group to the free amino group of methionyl-tRNA(fMet). The formyl group appears to play a dual role in the initiator identity of N-formylmethionyl-tRNA by promoting its recognition by IF2 and preventing the misappropriation of this tRNA by the elongation apparatus. In Corynebacterium efficiens (strain DSM 44549 / YS-314 / AJ 12310 / JCM 11189 / NBRC 100395), this protein is Methionyl-tRNA formyltransferase.